The sequence spans 408 residues: MGRPYVTLNLNGMFMDKFKPYSKSNAPITTLEKLSKALSISVEELKAIAELPLDEKYTLKEIPKIDGSKRIVYSLHPKMRLLQSRINKRIFKELVVFPSFLFGSVPSKNDVLNSNVKRDYVSCAKAHCGAKTVLKVDISNFFDNIHRDLVRSVFEEILHIKDEALEYLVDICTKDDFVVQGALTSSYIATLCLFAVEGDVVRRAQRKGLVYTRLVDDITVSSKISNYDFSQMQSHIERMLSEHDLPINKRKTKIFHCSSEPIKVHGLRVDYDSPRLPSDEVKRIRASIHNLKLLAAKNNTKTSVAYRKEFNRCMGRVNKLGRVAHEKYESFKKQLQAIKPMPSKRDVAVIDAAIKSLELSYSKGNQNKHWYKRKYDLTRYKMIILTRSESFKEKLECFKSRLASLKPL.

Positions 43 to 269 (EELKAIAELP…EPIKVHGLRV (227 aa)) constitute a Reverse transcriptase domain. Mg(2+)-binding residues include Asp-137, Asp-216, and Asp-217.

Belongs to the bacterial reverse transcriptase family.

It carries out the reaction DNA(n) + a 2'-deoxyribonucleoside 5'-triphosphate = DNA(n+1) + diphosphate. Its function is as follows. Reverse transcriptase (RT) component of antiviral defense system retron Ec48, composed of a non-coding RNA (ncRNA), this reverse transcriptase (RT) and the following membrane protein. Expression of this retron confers protection against bacteriophages lambda, T2, T4, T5 and T7. At multiplicity of infection (MOI) of 0.02 cultures grow normally when infected with lambda without collapsing, at MOI 2 cultures enter growth stasis. At MOI 3 cell membranes are permeabilized within 15 minutes of infection but do not lyse, suggesting the phage are not able to finish a replication cycle. Antiviral defense is suppressed by mutations that knockout the lambda gam expression or phage T7 gp5.9 expression; both viral genes inhibit host RecBCD. The Ec48 retron may sense the integrity of the RecBCD enzyme; when RecBCD is perturbed by viral proteins the Ec48 effector (the membrane protein) is activated, leading to abortive infection and bacterial growth arrest. Responsible for synthesis of msDNA-Ec48 (a branched molecule with RNA linked by a 2',5'-phosphodiester bond to ssDNA). The retron transcript serves as primer (from a conserved internal G residue) and template for the reaction, and codes for the RT. The protein is Retron Ec48 reverse transcriptase of Escherichia coli.